Consider the following 162-residue polypeptide: uncharacterized protein (162 aa).

A signal peptide spans 1-34 (MAREVISTSILMIATVVAVTAAIMVILPAVKDLA).

This is an uncharacterized protein from Archaeoglobus fulgidus (strain ATCC 49558 / DSM 4304 / JCM 9628 / NBRC 100126 / VC-16).